The sequence spans 321 residues: Endoglucanase 1 (321 aa).

The signal sequence occupies residues 1-27 (MSRKLRTLMAALCALPLAFAAAPPAHA). Asp-110 is a catalytic residue. Cys-112 and Cys-156 are oxidised to a cystine. The Proton donor role is filled by Asp-149. Asp-295 functions as the Nucleophile in the catalytic mechanism.

Belongs to the glycosyl hydrolase 6 (cellulase B) family.

It catalyses the reaction Endohydrolysis of (1-&gt;4)-beta-D-glucosidic linkages in cellulose, lichenin and cereal beta-D-glucans.. Its function is as follows. Implicated in the mechanism of induction exerted by cellobiose. The polypeptide is Endoglucanase 1 (celA1) (Streptomyces halstedii).